The chain runs to 619 residues: Replication restart protein PriA (619 aa).

Residues Leu119–Gly285 form the Helicase ATP-binding domain. Position 132–139 (Gly132–Thr139) interacts with ATP. The DEAH box signature appears at Asp228 to His231. Positions 336, 339, 345, 348, 363, 366, 376, and 379 each coordinate Zn(2+). Positions Pro371–Cys532 constitute a Helicase C-terminal domain.

It belongs to the helicase family. PriA subfamily. As to quaternary structure, component of the replication restart primosome. It depends on Zn(2+) as a cofactor.

It catalyses the reaction Couples ATP hydrolysis with the unwinding of duplex DNA by translocating in the 3'-5' direction.. It carries out the reaction ATP + H2O = ADP + phosphate + H(+). Functionally, initiates the restart of stalled replication forks, which reloads the replicative helicase on sites other than the origin of replication. Recognizes and binds to abandoned replication forks and remodels them to uncover a helicase loading site. Promotes assembly of the primosome at these replication forks. In terms of biological role, important for survival of the bacteria in host cells. This chain is Replication restart protein PriA, found in Helicobacter pylori (strain ATCC 700392 / 26695) (Campylobacter pylori).